The following is a 555-amino-acid chain: Urocanate hydratase (555 aa).

NAD(+) contacts are provided by residues 52-53 (GG), Gln130, 176-178 (GMG), Glu196, Arg201, 242-243 (NA), 263-267 (QTSAH), 273-274 (YL), and Tyr322. The active site involves Cys410. Gly492 contributes to the NAD(+) binding site.

The protein belongs to the urocanase family. Requires NAD(+) as cofactor.

The protein localises to the cytoplasm. The enzyme catalyses 4-imidazolone-5-propanoate = trans-urocanate + H2O. It functions in the pathway amino-acid degradation; L-histidine degradation into L-glutamate; N-formimidoyl-L-glutamate from L-histidine: step 2/3. Functionally, catalyzes the conversion of urocanate to 4-imidazolone-5-propionate. This Shewanella baltica (strain OS223) protein is Urocanate hydratase.